Reading from the N-terminus, the 387-residue chain is 1-deoxy-D-xylulose 5-phosphate reductoisomerase (387 aa).

Thr11, Gly12, Ser13, Ile14, Gly37, Arg39, and Asn123 together coordinate NADPH. Position 124 (Lys124) interacts with 1-deoxy-D-xylulose 5-phosphate. Glu125 is a binding site for NADPH. Residue Asp147 participates in Mn(2+) binding. 1-deoxy-D-xylulose 5-phosphate is bound by residues Ser148, Glu149, Ser173, and His196. Glu149 contacts Mn(2+). Gly202 serves as a coordination point for NADPH. 1-deoxy-D-xylulose 5-phosphate contacts are provided by Ser209, Asn214, Lys215, and Glu218. Residue Glu218 participates in Mn(2+) binding.

The protein belongs to the DXR family. It depends on Mg(2+) as a cofactor. Requires Mn(2+) as cofactor.

The catalysed reaction is 2-C-methyl-D-erythritol 4-phosphate + NADP(+) = 1-deoxy-D-xylulose 5-phosphate + NADPH + H(+). It participates in isoprenoid biosynthesis; isopentenyl diphosphate biosynthesis via DXP pathway; isopentenyl diphosphate from 1-deoxy-D-xylulose 5-phosphate: step 1/6. Functionally, catalyzes the NADPH-dependent rearrangement and reduction of 1-deoxy-D-xylulose-5-phosphate (DXP) to 2-C-methyl-D-erythritol 4-phosphate (MEP). The polypeptide is 1-deoxy-D-xylulose 5-phosphate reductoisomerase (Corynebacterium diphtheriae (strain ATCC 700971 / NCTC 13129 / Biotype gravis)).